We begin with the raw amino-acid sequence, 216 residues long: Ribonuclease HII (216 aa).

Positions 33-216 (WPVAGADEAG…RMSFRPFRQV (184 aa)) constitute an RNase H type-2 domain. A divalent metal cation contacts are provided by aspartate 39, glutamate 40, and aspartate 130.

The protein belongs to the RNase HII family. Mn(2+) serves as cofactor. Mg(2+) is required as a cofactor.

The protein localises to the cytoplasm. The catalysed reaction is Endonucleolytic cleavage to 5'-phosphomonoester.. In terms of biological role, endonuclease that specifically degrades the RNA of RNA-DNA hybrids. This Rhizobium meliloti (strain 1021) (Ensifer meliloti) protein is Ribonuclease HII.